We begin with the raw amino-acid sequence, 301 residues long: Nitric oxide synthase-interacting protein (301 aa).

Serine 36 carries the phosphoserine modification. Residues 55 to 75 are U-box-like; it reads DPVVTPDGYLYEREAILEYIL. A Nuclear localization signal motif is present at residues 78–101; the sequence is KREIARQVKAYEKQRGARREEQKE. Residues 131–154 form a disordered region; it reads PKAATLPNTEGEQPGPSVGPVGKD.

The protein belongs to the NOSIP family. In terms of assembly, interacts with NOS1 and NOS3. Interacts with PP2A holoenzyme, containing PPP2CA, PPP2CB, PPP2R1A and PPP2R2A subunits.

Its subcellular location is the cytoplasm. It localises to the nucleus. It catalyses the reaction S-ubiquitinyl-[E2 ubiquitin-conjugating enzyme]-L-cysteine + [acceptor protein]-L-lysine = [E2 ubiquitin-conjugating enzyme]-L-cysteine + N(6)-ubiquitinyl-[acceptor protein]-L-lysine.. Its pathway is protein modification; protein ubiquitination. Its function is as follows. E3 ubiquitin-protein ligase that is essential for proper development of the forebrain, the eye and the face. Catalyzes monoubiquitination of serine/threonine-protein phosphatase 2A (PP2A) catalytic subunit PPP2CA/PPP2CB. Negatively regulates nitric oxide production by inducing NOS1 and NOS3 translocation to actin cytoskeleton and inhibiting their enzymatic activity. The protein is Nitric oxide synthase-interacting protein (Nosip) of Mus musculus (Mouse).